A 99-amino-acid polypeptide reads, in one-letter code: DNA-binding protein HU (99 aa).

It belongs to the bacterial histone-like protein family. Homodimer.

In terms of biological role, histone-like DNA-binding protein which is capable of wrapping DNA to stabilize it, and thus to prevent its denaturation under extreme environmental conditions. This Rickettsia typhi (strain ATCC VR-144 / Wilmington) protein is DNA-binding protein HU (hup).